We begin with the raw amino-acid sequence, 234 residues long: Phosphoribosylaminoimidazole-succinocarboxamide synthase (234 aa).

The protein belongs to the SAICAR synthetase family.

The catalysed reaction is 5-amino-1-(5-phospho-D-ribosyl)imidazole-4-carboxylate + L-aspartate + ATP = (2S)-2-[5-amino-1-(5-phospho-beta-D-ribosyl)imidazole-4-carboxamido]succinate + ADP + phosphate + 2 H(+). Its pathway is purine metabolism; IMP biosynthesis via de novo pathway; 5-amino-1-(5-phospho-D-ribosyl)imidazole-4-carboxamide from 5-amino-1-(5-phospho-D-ribosyl)imidazole-4-carboxylate: step 1/2. The sequence is that of Phosphoribosylaminoimidazole-succinocarboxamide synthase from Staphylococcus epidermidis (strain ATCC 35984 / DSM 28319 / BCRC 17069 / CCUG 31568 / BM 3577 / RP62A).